Reading from the N-terminus, the 279-residue chain is Small ribosomal subunit protein uS2 (279 aa).

Positions 232 to 260 (KVDMEAAGENAPKGAGKKKNTKARMDKAE) are disordered.

The protein belongs to the universal ribosomal protein uS2 family.

The chain is Small ribosomal subunit protein uS2 from Phocaeicola vulgatus (strain ATCC 8482 / DSM 1447 / JCM 5826 / CCUG 4940 / NBRC 14291 / NCTC 11154) (Bacteroides vulgatus).